A 448-amino-acid chain; its full sequence is Phosphoglucosamine mutase (448 aa).

The active-site Phosphoserine intermediate is S104. 4 residues coordinate Mg(2+): S104, D243, D245, and D247. S104 carries the phosphoserine modification.

The protein belongs to the phosphohexose mutase family. Requires Mg(2+) as cofactor. In terms of processing, activated by phosphorylation.

The catalysed reaction is alpha-D-glucosamine 1-phosphate = D-glucosamine 6-phosphate. Functionally, catalyzes the conversion of glucosamine-6-phosphate to glucosamine-1-phosphate. In Xylella fastidiosa (strain 9a5c), this protein is Phosphoglucosamine mutase.